Here is a 445-residue protein sequence, read N- to C-terminus: UPF0210 protein llmg_1581 (445 aa).

This sequence belongs to the UPF0210 family. As to quaternary structure, homodimer.

The sequence is that of UPF0210 protein llmg_1581 from Lactococcus lactis subsp. cremoris (strain MG1363).